The chain runs to 245 residues: Spore membrane assembly protein 1 (245 aa).

Functionally, involved in spore and ascus formation. Required for the efficient assembly of the precursors of the prospore membrane to a continuous prospore membrane. This chain is Spore membrane assembly protein 1 (SMA1), found in Saccharomyces cerevisiae (strain ATCC 204508 / S288c) (Baker's yeast).